Here is a 429-residue protein sequence, read N- to C-terminus: Adenylosuccinate synthetase (429 aa).

Residues Gly12–Lys18 and Gly40–Thr42 contribute to the GTP site. Asp13 functions as the Proton acceptor in the catalytic mechanism. The Mg(2+) site is built by Asp13 and Gly40. IMP contacts are provided by residues Asp13–Lys16, Asn38–His41, Thr128, Arg142, Gln223, Thr238, and Arg302. His41 (proton donor) is an active-site residue. Thr298–Arg304 lines the substrate pocket. GTP-binding positions include Arg304, Leu330–Asp332, and Ser412–Gly414.

The protein belongs to the adenylosuccinate synthetase family. In terms of assembly, homodimer. The cofactor is Mg(2+).

It is found in the cytoplasm. It carries out the reaction IMP + L-aspartate + GTP = N(6)-(1,2-dicarboxyethyl)-AMP + GDP + phosphate + 2 H(+). It functions in the pathway purine metabolism; AMP biosynthesis via de novo pathway; AMP from IMP: step 1/2. Functionally, plays an important role in the de novo pathway of purine nucleotide biosynthesis. Catalyzes the first committed step in the biosynthesis of AMP from IMP. This Lactobacillus gasseri (strain ATCC 33323 / DSM 20243 / BCRC 14619 / CIP 102991 / JCM 1131 / KCTC 3163 / NCIMB 11718 / NCTC 13722 / AM63) protein is Adenylosuccinate synthetase.